Consider the following 227-residue polypeptide: NADH-quinone oxidoreductase subunit C (227 aa).

This sequence belongs to the complex I 30 kDa subunit family. NDH-1 is composed of 14 different subunits. Subunits NuoB, C, D, E, F, and G constitute the peripheral sector of the complex.

The protein resides in the cell inner membrane. It catalyses the reaction a quinone + NADH + 5 H(+)(in) = a quinol + NAD(+) + 4 H(+)(out). In terms of biological role, NDH-1 shuttles electrons from NADH, via FMN and iron-sulfur (Fe-S) centers, to quinones in the respiratory chain. The immediate electron acceptor for the enzyme in this species is believed to be ubiquinone. Couples the redox reaction to proton translocation (for every two electrons transferred, four hydrogen ions are translocated across the cytoplasmic membrane), and thus conserves the redox energy in a proton gradient. This chain is NADH-quinone oxidoreductase subunit C, found in Coxiella burnetii (strain Dugway 5J108-111).